The sequence spans 108 residues: Small ribosomal subunit protein uS10 (108 aa).

It belongs to the universal ribosomal protein uS10 family. As to quaternary structure, part of the 30S ribosomal subunit.

Involved in the binding of tRNA to the ribosomes. The protein is Small ribosomal subunit protein uS10 of Ehrlichia chaffeensis (strain ATCC CRL-10679 / Arkansas).